A 530-amino-acid chain; its full sequence is Pre-mRNA-splicing factor PRP9 (530 aa).

A Matrin-type 1 zinc finger spans residues 280 to 310 (IYCPFCSRWFKTSSVFESHLVGKIHKKNESK). The disordered stretch occupies residues 367-388 (DSTEKEGAEQVDGEQRDGQLQE). Residues 368 to 388 (STEKEGAEQVDGEQRDGQLQE) are compositionally biased toward basic and acidic residues. The segment at 421–452 (YRCEICSNKVYNGRRTFERHFNEERHIYHLRC) adopts a Matrin-type 2 zinc-finger fold. The disordered stretch occupies residues 488–516 (AVPPKPNPSQLKVPTELELEEEDEEGNVM). Over residues 504–513 (LELEEEDEEG) the composition is skewed to acidic residues.

The protein belongs to the SF3A3 family. As to quaternary structure, belongs to the CWC complex (or CEF1-associated complex), a spliceosome sub-complex reminiscent of a late-stage spliceosome composed of the U2, U5 and U6 snRNAs and at least BUD13, BUD31, BRR2, CDC40, CEF1, CLF1, CUS1, CWC2, CWC15, CWC21, CWC22, CWC23, CWC24, CWC25, CWC27, ECM2, HSH155, IST3, ISY1, LEA1, MSL1, NTC20, PRP8, PRP9, PRP11, PRP19, PRP21, PRP22, PRP45, PRP46, SLU7, SMB1, SMD1, SMD2, SMD3, SMX2, SMX3, SNT309, SNU114, SPP2, SYF1, SYF2, RSE1 and YJU2.

It is found in the nucleus. In terms of biological role, mRNA splicing factors, PRP9, PRP11, and PRP21, are necessary for binding of the U2 snRNP to the pre-mRNA in an early step of spliceosome assembly. This chain is Pre-mRNA-splicing factor PRP9 (PRP9), found in Saccharomyces cerevisiae (strain ATCC 204508 / S288c) (Baker's yeast).